Consider the following 462-residue polypeptide: tRNA modification GTPase MnmE (462 aa).

(6S)-5-formyl-5,6,7,8-tetrahydrofolate contacts are provided by R23, E88, and R127. The TrmE-type G domain maps to 224–383; the sequence is GLATVIIGRP…LEKAIADLFF (160 aa). N234 lines the K(+) pocket. Residues 234 to 239, 253 to 259, and 278 to 281 each bind GTP; these read NVGKSS, TDIPGTT, and DTAG. S238 contributes to the Mg(2+) binding site. T253, I255, and T258 together coordinate K(+). T259 contacts Mg(2+). K462 provides a ligand contact to (6S)-5-formyl-5,6,7,8-tetrahydrofolate.

Belongs to the TRAFAC class TrmE-Era-EngA-EngB-Septin-like GTPase superfamily. TrmE GTPase family. Homodimer. Heterotetramer of two MnmE and two MnmG subunits. K(+) is required as a cofactor.

It is found in the cytoplasm. In terms of biological role, exhibits a very high intrinsic GTPase hydrolysis rate. Involved in the addition of a carboxymethylaminomethyl (cmnm) group at the wobble position (U34) of certain tRNAs, forming tRNA-cmnm(5)s(2)U34. The sequence is that of tRNA modification GTPase MnmE from Geobacillus kaustophilus (strain HTA426).